Here is a 342-residue protein sequence, read N- to C-terminus: Heat-inducible transcription repressor HrcA (342 aa).

This sequence belongs to the HrcA family.

Its function is as follows. Negative regulator of class I heat shock genes (grpE-dnaK-dnaJ and groELS operons). Prevents heat-shock induction of these operons. The protein is Heat-inducible transcription repressor HrcA of Geobacter sulfurreducens (strain ATCC 51573 / DSM 12127 / PCA).